The chain runs to 557 residues: Dihydroxy-acid dehydratase 2 (557 aa).

C50 contacts [2Fe-2S] cluster. D82 is a binding site for Mg(2+). A [2Fe-2S] cluster-binding site is contributed by C123. Residues D124 and K125 each contribute to the Mg(2+) site. K125 bears the N6-carboxylysine mark. Residue C195 participates in [2Fe-2S] cluster binding. E447 provides a ligand contact to Mg(2+). The active-site Proton acceptor is S473.

It belongs to the IlvD/Edd family. As to quaternary structure, homodimer. It depends on [2Fe-2S] cluster as a cofactor. The cofactor is Mg(2+).

The enzyme catalyses (2R)-2,3-dihydroxy-3-methylbutanoate = 3-methyl-2-oxobutanoate + H2O. It carries out the reaction (2R,3R)-2,3-dihydroxy-3-methylpentanoate = (S)-3-methyl-2-oxopentanoate + H2O. It functions in the pathway amino-acid biosynthesis; L-isoleucine biosynthesis; L-isoleucine from 2-oxobutanoate: step 3/4. The protein operates within amino-acid biosynthesis; L-valine biosynthesis; L-valine from pyruvate: step 3/4. Functions in the biosynthesis of branched-chain amino acids. Catalyzes the dehydration of (2R,3R)-2,3-dihydroxy-3-methylpentanoate (2,3-dihydroxy-3-methylvalerate) into 2-oxo-3-methylpentanoate (2-oxo-3-methylvalerate) and of (2R)-2,3-dihydroxy-3-methylbutanoate (2,3-dihydroxyisovalerate) into 2-oxo-3-methylbutanoate (2-oxoisovalerate), the penultimate precursor to L-isoleucine and L-valine, respectively. This is Dihydroxy-acid dehydratase 2 from Burkholderia lata (strain ATCC 17760 / DSM 23089 / LMG 22485 / NCIMB 9086 / R18194 / 383).